Consider the following 650-residue polypeptide: uncharacterized protein (650 aa).

The protein belongs to the MG032/MG096/MG288 family.

This is an uncharacterized protein from Mycoplasma genitalium (strain ATCC 33530 / DSM 19775 / NCTC 10195 / G37) (Mycoplasmoides genitalium).